The following is a 229-amino-acid chain: Matrix protein (229 aa).

The span at 1-12 (MSSFKKILGLSS) shows a compositional bias: low complexity. Positions 1–35 (MSSFKKILGLSSKSHKKSKKMGLPPPYDESCPMET) are disordered. Positions 2-4 (SSF) match the dynamin binding motif. A PPXY motif motif is present at residues 24–27 (PPPY). Positions 37 to 40 (PSAP) match the PTAP/PSAP motif motif.

This sequence belongs to the vesiculoviruses matrix protein family. As to quaternary structure, homomultimer. Interacts with viral nucleocapsid; this interaction contributes to the virion assembly. Interacts with the viral envelope glycoprotein; this interaction contributes to the virion assembly. Interacts with host RAE1-NUP98 complex. Interacts with host NEDD4 and TSG101. Interacts with host dynamin. Interacts with host NDUFAF4; the interaction inhibits viral propagation and is independent of interferon activation. Interacts with host GTF2H5; the interaction may inhibit host transcription. Phosphorylated by host.

The protein resides in the virion. It is found in the host endomembrane system. It localises to the host nucleus membrane. The protein localises to the host nucleus. Its subcellular location is the host cytoplasm. Forms a double layer around the helical nucleocapsid, the inner matrix layer binding to the N helix and the outer matrix layer binding to the envelope glycoprotein. Plays a major role in assembly and budding of virion, by recruiting cellular partners of the ESCRT complexes that play a key role in releasing the budding particle from the host membrane. Condensates the ribonucleocapsid core during virus assembly. Inhibits the host mRNA nuclear export thereby inducing the shut off of cellular transcription and preventing the interferon signaling and the establishment of antiviral state in infected cells. This shutoff presumably inhibits interferon signaling and thus establishment of antiviral state in virus infected cells. Induces cell-rounding, cytoskeleton disorganization and apoptosis in infected cell. Inhibits host transcription, possibly through interaction with host DNA repair factor IIH/TFIIH GTF2H5 subunit. This is Matrix protein (M) from Aedes (Bovine).